The primary structure comprises 323 residues: E3 ubiquitin-protein ligase SIRP1 (323 aa).

Residues 199–240 (CSVCLDDLEVGSQAKQMPCEHKFHSSCILPWLELHSSCPVCR) form an RING-type; atypical zinc finger. Disordered stretches follow at residues 248–280 (TKDLNEPSNIGRVEDSHEEVRADGPGNVSESSN) and 296–323 (REAQNAGGVSTDQQSPHTSGTNPNAGHS). The span at 259-269 (RVEDSHEEVRA) shows a compositional bias: basic and acidic residues.

The protein resides in the cytoplasm. It carries out the reaction S-ubiquitinyl-[E2 ubiquitin-conjugating enzyme]-L-cysteine + [acceptor protein]-L-lysine = [E2 ubiquitin-conjugating enzyme]-L-cysteine + N(6)-ubiquitinyl-[acceptor protein]-L-lysine.. Its pathway is protein modification; protein ubiquitination. Its function is as follows. Possesses E3 ubiqutin-protein ligase activity in vitro. Acts as negative regulator of salinity stress tolerance mediated by the ubiquitin-proteasome degradation pathway. This is E3 ubiquitin-protein ligase SIRP1 from Oryza sativa subsp. japonica (Rice).